Reading from the N-terminus, the 400-residue chain is Cytoplasmic polyadenylated homeobox-like protein 2 (400 aa).

The disordered stretch occupies residues 1–29 (MSSQAFPAEEDHHNEERQTKKKRKTKHRH). Residues 9–18 (EEDHHNEERQ) are compositionally biased toward basic and acidic residues. Residues 19–29 (TKKKRKTKHRH) are compositionally biased toward basic residues. The homeobox DNA-binding region spans 24-83 (KTKHRHKFSEELLQELKEIFGENGYPDFTTRKTLANKFDCPVNVINNWFQNNRARLPPEE).

It is found in the nucleus. The protein is Cytoplasmic polyadenylated homeobox-like protein 2 of Homo sapiens (Human).